A 557-amino-acid polypeptide reads, in one-letter code: CTP synthase (557 aa).

The amidoligase domain stretch occupies residues 1–267 (MAKYIFVTGG…GAYLTQRLGL (267 aa)). Ser13 contacts CTP. Residue Ser13 participates in UTP binding. 14–19 (SVGKGI) is an ATP binding site. Tyr54 contributes to the L-glutamine binding site. Asp71 contributes to the ATP binding site. Residues Asp71 and Glu141 each coordinate Mg(2+). Residues 148–150 (DIE), 188–193 (KTKPTQ), and Lys224 contribute to the CTP site. UTP-binding positions include 188-193 (KTKPTQ) and Lys224. The 244-residue stretch at 292–535 (AIALVGKYVE…VAAAAKTFRE (244 aa)) folds into the Glutamine amidotransferase type-1 domain. Gly354 contributes to the L-glutamine binding site. Catalysis depends on Cys381, which acts as the Nucleophile; for glutamine hydrolysis. L-glutamine is bound by residues 382–385 (LGMQ), Glu406, and Arg463. Active-site residues include His508 and Glu510. A disordered region spans residues 536–557 (GDQRPLPLEQNGAVTEHEPHSR).

It belongs to the CTP synthase family. As to quaternary structure, homotetramer.

The enzyme catalyses UTP + L-glutamine + ATP + H2O = CTP + L-glutamate + ADP + phosphate + 2 H(+). The catalysed reaction is L-glutamine + H2O = L-glutamate + NH4(+). It carries out the reaction UTP + NH4(+) + ATP = CTP + ADP + phosphate + 2 H(+). It participates in pyrimidine metabolism; CTP biosynthesis via de novo pathway; CTP from UDP: step 2/2. With respect to regulation, allosterically activated by GTP, when glutamine is the substrate; GTP has no effect on the reaction when ammonia is the substrate. The allosteric effector GTP functions by stabilizing the protein conformation that binds the tetrahedral intermediate(s) formed during glutamine hydrolysis. Inhibited by the product CTP, via allosteric rather than competitive inhibition. Catalyzes the ATP-dependent amination of UTP to CTP with either L-glutamine or ammonia as the source of nitrogen. Regulates intracellular CTP levels through interactions with the four ribonucleotide triphosphates. The protein is CTP synthase of Roseiflexus sp. (strain RS-1).